The sequence spans 185 residues: Large ribosomal subunit protein bL25 (185 aa).

Belongs to the bacterial ribosomal protein bL25 family. CTC subfamily. As to quaternary structure, part of the 50S ribosomal subunit; part of the 5S rRNA/L5/L18/L25 subcomplex. Contacts the 5S rRNA. Binds to the 5S rRNA independently of L5 and L18.

This is one of the proteins that binds to the 5S RNA in the ribosome where it forms part of the central protuberance. In Chlamydia trachomatis serovar A (strain ATCC VR-571B / DSM 19440 / HAR-13), this protein is Large ribosomal subunit protein bL25.